A 308-amino-acid chain; its full sequence is Alpha/beta hydrolase domain-containing protein WAV2 (308 aa).

Residues 6–26 (SALFYGFGGIVVAGVALLVAF) traverse the membrane as a helical segment. Catalysis depends on charge relay system residues Ser159, Asp243, and Arg308.

It belongs to the serine esterase family. As to expression, expressed in roots, rosette leaves, stems and flowers.

Its subcellular location is the cell membrane. Functionally, involved in the regulation of root growth. Involved in the suppression of the root bending in response to touch stimuli, gravity and light. Negatively regulates stimulus-induced root bending through inhibition of root tip rotation. This chain is Alpha/beta hydrolase domain-containing protein WAV2, found in Arabidopsis thaliana (Mouse-ear cress).